A 441-amino-acid chain; its full sequence is C4-dicarboxylate transport protein (441 aa).

Residues 1–30 lie on the Cytoplasmic side of the membrane; it reads MIIEHSAEVRGKTPLYRHLYVQVLAAIAAG. The helical transmembrane segment at 31–49 threads the bilayer; the sequence is ILLGHFYPDIGTELKPLGD. Residues 50–68 lie on the Periplasmic side of the membrane; the sequence is AFIRLVKMIIAPVIFLTVA. A helical membrane pass occupies residues 69–87; sequence TGIAGMTDLAKVGRVAGKA. At 88–99 the chain is on the cytoplasmic side; that stretch reads MIYFLAFSTLAL. The helical transmembrane segment at 100-118 threads the bilayer; the sequence is VVGLVVANVVQPGAGMHID. The Periplasmic segment spans residues 119–149; the sequence is PASLDAKAVATYAEKAHEQSITGFLMNIIPT. A helical membrane pass occupies residues 150–168; it reads TLVGAFAEGDILQVLFISV. At 169-171 the chain is on the cytoplasmic side; the sequence is LFG. Residues 172-190 traverse the membrane as a helical segment; sequence ISLAIVGKKAEPVVDFLQA. The Periplasmic portion of the chain corresponds to 191-209; sequence LTLPIFRLVAILMKAAPIG. Residues 210-228 traverse the membrane as a helical segment; the sequence is AFGAMAFTIGKYGIASIAN. Over 229-241 the chain is Cytoplasmic; that stretch reads LAMLIGTFYLTSF. The helical transmembrane segment at 242-260 threads the bilayer; it reads LFVFIVLGAVARYNGFSIL. Residues 261–281 are Periplasmic-facing; it reads SLIRYIKEELLLVLGTSSSEA. A helical membrane pass occupies residues 282–300; the sequence is ALPGLMNKMEKAGCKRSVV. Residues 301 to 320 are Cytoplasmic-facing; the sequence is GLVIPTGYSFNLDGTNIYMT. The chain crosses the membrane as a helical span at residues 321–339; the sequence is LAALFIAQATDTPLSYGDQ. Over 340-350 the chain is Periplasmic; it reads ILLLLVAMLSS. Residues 351–369 form a helical membrane-spanning segment; that stretch reads KGAAGITGAGFITLAATLS. At 370 to 378 the chain is on the cytoplasmic side; sequence VVPSVPVAG. Residues 379–398 form a helical membrane-spanning segment; sequence MALILGIDRFMSECRALTNF. Residues 399 to 405 are Periplasmic-facing; that stretch reads VGNAVAT. The helical transmembrane segment at 406–424 threads the bilayer; the sequence is IVVAKWEGELDQAQLSAAL. Topologically, residues 425 to 441 are cytoplasmic; the sequence is GGEASVEAIPAVVQPAE.

This sequence belongs to the dicarboxylate/amino acid:cation symporter (DAACS) (TC 2.A.23) family.

The protein resides in the cell inner membrane. Functionally, responsible for the transport of dicarboxylates such as succinate, fumarate, and malate from the periplasm across the inner membrane. This transport system plays an important role in the energy supply of rhizobium-legume symbionts. This is C4-dicarboxylate transport protein (dctA) from Rhizobium meliloti (strain 1021) (Ensifer meliloti).